The following is a 113-amino-acid chain: Protein USP2 (113 aa).

Residues 1–18 (MKITMFFAALSAASGVFA) form the signal peptide. 6 repeat units span residues 32 to 37 (IGAGVG), 40 to 45 (IGAGVG), 46 to 49 (SYGY), 50 to 53 (PYGA), 59 to 65 (LQLLPLR), and 69 to 75 (LRRLPLR). The tract at residues 32 to 45 (IGAGVGIGIGAGVG) is 2 X 6 AA repeats. Residues 46–53 (SYGYPYGA) form a 2 X 4 AA approximate tandem repeats region. The interval 59-75 (LQLLPLRWLPLRRLPLR) is 2 X 7 AA approximate repeats.

It is found in the secreted. The protein is Protein USP2 (USP2) of Puccinia graminis (Black stem rust fungus).